A 119-amino-acid polypeptide reads, in one-letter code: Large ribosomal subunit protein bL20 (119 aa).

This sequence belongs to the bacterial ribosomal protein bL20 family.

Functionally, binds directly to 23S ribosomal RNA and is necessary for the in vitro assembly process of the 50S ribosomal subunit. It is not involved in the protein synthesizing functions of that subunit. This is Large ribosomal subunit protein bL20 from Caldanaerobacter subterraneus subsp. tengcongensis (strain DSM 15242 / JCM 11007 / NBRC 100824 / MB4) (Thermoanaerobacter tengcongensis).